The primary structure comprises 1365 residues: DNA-directed RNA polymerase subunit beta'' (1365 aa).

Positions 224, 295, 302, and 305 each coordinate Zn(2+).

It belongs to the RNA polymerase beta' chain family. RpoC2 subfamily. In terms of assembly, in plastids the minimal PEP RNA polymerase catalytic core is composed of four subunits: alpha, beta, beta', and beta''. When a (nuclear-encoded) sigma factor is associated with the core the holoenzyme is formed, which can initiate transcription. The cofactor is Zn(2+).

It is found in the plastid. The protein localises to the chloroplast. It catalyses the reaction RNA(n) + a ribonucleoside 5'-triphosphate = RNA(n+1) + diphosphate. In terms of biological role, DNA-dependent RNA polymerase catalyzes the transcription of DNA into RNA using the four ribonucleoside triphosphates as substrates. This is DNA-directed RNA polymerase subunit beta'' from Fagopyrum esculentum subsp. ancestrale (Wild buckwheat).